The chain runs to 632 residues: 1-deoxy-D-xylulose-5-phosphate synthase (632 aa).

Residues His-78 and 119 to 121 (AHS) each bind thiamine diphosphate. Asp-150 provides a ligand contact to Mg(2+). Residues 151 to 152 (GA), Asn-179, Tyr-286, and Glu-368 each bind thiamine diphosphate. A Mg(2+)-binding site is contributed by Asn-179.

This sequence belongs to the transketolase family. DXPS subfamily. In terms of assembly, homodimer. Requires Mg(2+) as cofactor. The cofactor is thiamine diphosphate.

The enzyme catalyses D-glyceraldehyde 3-phosphate + pyruvate + H(+) = 1-deoxy-D-xylulose 5-phosphate + CO2. It functions in the pathway metabolic intermediate biosynthesis; 1-deoxy-D-xylulose 5-phosphate biosynthesis; 1-deoxy-D-xylulose 5-phosphate from D-glyceraldehyde 3-phosphate and pyruvate: step 1/1. Catalyzes the acyloin condensation reaction between C atoms 2 and 3 of pyruvate and glyceraldehyde 3-phosphate to yield 1-deoxy-D-xylulose-5-phosphate (DXP). The polypeptide is 1-deoxy-D-xylulose-5-phosphate synthase (Albidiferax ferrireducens (strain ATCC BAA-621 / DSM 15236 / T118) (Rhodoferax ferrireducens)).